A 222-amino-acid polypeptide reads, in one-letter code: Triosephosphate isomerase (222 aa).

Substrate is bound at residue 9–11 (NYK). H93 acts as the Electrophile in catalysis. E141 serves as the catalytic Proton acceptor. Substrate contacts are provided by residues I146, G181, and 202 to 203 (AS).

The protein belongs to the triosephosphate isomerase family. In terms of assembly, homotetramer; dimer of dimers.

Its subcellular location is the cytoplasm. The enzyme catalyses D-glyceraldehyde 3-phosphate = dihydroxyacetone phosphate. It functions in the pathway carbohydrate biosynthesis; gluconeogenesis. It participates in carbohydrate degradation; glycolysis; D-glyceraldehyde 3-phosphate from glycerone phosphate: step 1/1. Functionally, involved in the gluconeogenesis. Catalyzes stereospecifically the conversion of dihydroxyacetone phosphate (DHAP) to D-glyceraldehyde-3-phosphate (G3P). This chain is Triosephosphate isomerase, found in Methanosarcina barkeri (strain Fusaro / DSM 804).